Here is a 262-residue protein sequence, read N- to C-terminus: Hydroxyacylglutathione hydrolase (262 aa).

Residues His-53, His-55, Asp-57, His-58, His-111, Asp-128, and His-166 each contribute to the Zn(2+) site.

The protein belongs to the metallo-beta-lactamase superfamily. Glyoxalase II family. Monomer. The cofactor is Zn(2+).

It carries out the reaction an S-(2-hydroxyacyl)glutathione + H2O = a 2-hydroxy carboxylate + glutathione + H(+). It functions in the pathway secondary metabolite metabolism; methylglyoxal degradation; (R)-lactate from methylglyoxal: step 2/2. Functionally, thiolesterase that catalyzes the hydrolysis of S-D-lactoyl-glutathione to form glutathione and D-lactic acid. The protein is Hydroxyacylglutathione hydrolase of Nitrosomonas europaea (strain ATCC 19718 / CIP 103999 / KCTC 2705 / NBRC 14298).